The chain runs to 467 residues: Neurexin-1-beta (467 aa).

An N-terminal signal peptide occupies residues 1–45 (MYQRMLRCGAELGSPGGGGGGAGGRLALLWIVPLTLSGLLGVAWG). Residues 46–391 (ASSLGAHHIH…EVIRESSSTT (346 aa)) are Extracellular-facing. The region spanning 86-284 (YIFSKGGGQI…DANIAIVGNV (199 aa)) is the Laminin G-like domain. Positions 136 and 153 each coordinate Ca(2+). A glycan (N-linked (GlcNAc...) asparagine) is linked at Asn183. Positions 200–229 (GNNDNERLAIARQRIPYRLGRVVDEWLLDK) are essential for interaction with CBLN1; modulates interaction affinity with NLGN1, NLGN2 and NLGN3; prevents interaction with DAG1/alpha-dystroglycan; modulates interaction with alpha-latrotoxin. 2 residues coordinate Ca(2+): Ile235 and Asn237. A disordered region spans residues 318-380 (LATSTARRGN…AGGREPYPGS (63 aa)). Polar residues predominate over residues 324 to 339 (RRGNSPTKEPVSQTTD). O-linked (Xyl...) (heparan sulfate) serine glycosylation occurs at Ser345. The helical transmembrane segment at 392 to 412 (GMVVGIVAAAALCILILLYAM) threads the bilayer. The Cytoplasmic portion of the chain corresponds to 413–467 (YKYRNRDEGSYHVDESRNYISNSAQSNGAVVKEKQPSSAKSANKNKKNKDKEYYV). The segment at 434–467 (NSAQSNGAVVKEKQPSSAKSANKNKKNKDKEYYV) is disordered. A phosphoserine mark is found at Ser449, Ser450, and Ser453.

The protein belongs to the neurexin family. As to quaternary structure, the cytoplasmic C-terminal region binds to CASK. Binds NLGN1, NLGN2 and NLGN3, DAG1 (alpha-dystroglycan) and alpha-latrotoxin. Binding to neuroligins is calcium-dependent, and the binding preference ranks as follow: NLGN1 &gt; NLGN4 &gt;&gt; NLGN3 &gt; NLGN2. Interacts with CBLN2 and more weakly with CBLN4. Interacts with CBLN1; interaction is CBLN1 hexamer form-dependent; CBLN1-binding is calcium-independent; isoform 1b does not interact with CBLN1. Interacts with CLSTN3. O-glycosylated; contains heparan sulfate. Heparan sulfate attachment is required for synapse development by mediating interactions with neuroligins.

It is found in the presynaptic cell membrane. Neuronal cell surface protein involved in cell recognition and cell adhesion by forming intracellular junctions through binding to neuroligins. Plays a role in formation of synaptic junctions. Functions as part of a trans-synaptic complex by binding to cerebellins and postsynaptic GRID1. This interaction helps regulate the activity of NMDA and AMPA receptors at hippocampal synapses without affecting synapse formation. NRXN1B-CBLN2-GRID1 complex transduce presynaptic signals into postsynaptic NMDAR response. The polypeptide is Neurexin-1-beta (Bos taurus (Bovine)).